Here is a 1444-residue protein sequence, read N- to C-terminus: MKNKGAKQKLKRKGAASAFGCDLTEYLESSGQDVPYVLKSCAEFIETHGIVDGIYRLSGVTSNIQRLRQEFGSDQCPDLTREVYLQDIHCVGSLCKLYFRELPNPLLTYELYEKFTEAVSHCPEEGQLARIQNVIQELPPSHYRTLEYLIRHLAHIASFSSKTNMHARNLALVWAPNLLRSKEIEATGCNGDAAFLAVRVQQVVIEFILNHVDQIFNNGAPGSLENDENRPIMKSLTLPALSLPMKLVSLEEAQARSLATNHPARKERRENSLPEIVPPMGTLFHTVLELPDNKRKLSSKSKKWKSIFNLGRSGSDSKSKLSRNGSVFVRGQRLSVEKATIRPAKSMDSLCSVPVEGKETKGNFNRTVTTGGFFIPATKMHSTGTGSSCDLTKQEGEWGQEGMPPGAEGGFDVSSDRSHLQGAQARPPPEQLKVFRPVEDPESEQTAPKMLGMFYTSNDSPSKSVFTSSLFQMEPSPRNQRKALNISEPFAVSVPLRVSAVISTNSTPCRTPPKELQSLSSLEEFSFHGSESGGWPEEEKPLGAETSAASVPKKAGLEDAKAVPEAPGTVECSKGLSQEPGAHLEEKKTPESSLSSQHLNELEKRPNPEKVVEEGREAGEMESSTLQESPRARAEAVLLHEMDEDDLANALIWPEIQQELKIIESEEELSSLPPPALKTSPIQPILESSLGPFIPSEPPGSLPCGSFPAPVSTPLEVWTRDPANQSTQGASTAASREKPEPEQGLHPDLASLAPLEIVPFEKASPQATVEVGGPGNLSPPLPPAPPPPTPLEESTPVLLSKGGPEREDSSRKLRTDLYIDQLKSQDSPEISSLCQGEEATPRHSDKQNSKNAASEGKGCGFPSPTREVEIVSQEEEDVTHSVQEPSDCDEDDTVTDIAQHGLEMVEPWEEPQWVTSPLHSPTLKDAHKAQVQGLQGHQLEKRLSHRPSLRQSHSLDSKPTVKSQWTLEVPSSSSCANLETERNSDPLQPQAPRREITGWDEKALRSFREFSGLKGAEAPPNQKGPSGVQPNPAETSPISLAEGKELGTHLGHSSPQIRQGGVPGPESSKESSPSVQDSTSPGEHPAKLQLKSTECGPPKGKNRPSSLNLDPAIPIADLFWFENVASFSSPGMQVSEPGDPKVTWMTSSYCKADPWRVYSQDPQDLDIVAHALTGRRNSAPVSVSAVRTSFMVKMCQARAVPVIPPKIQYTQIPQPLPSQSSGENGVQPLERSQEGPSSTSGTTQKPAKDDSPSSLESSKEEKPKQDPGAIKSSPVDATAPCMCEGPTLSPEPGSSNLLSTQDAVVQCRKRMSETEPSGDNLLSSKLERPSGGSKPFHRSRPGRPQSLILFSPPFPIMDHLPPSSTVTDSKVLLSPIRSPTQTVSPGLLCGELAENTWVTPEGVTLRNKMTIPKNGQRLETSTSCFYQPQRRSVILDGRSGRQIE.

The Rho-GAP domain occupies 21-216 (CDLTEYLESS…FILNHVDQIF (196 aa)). At S272 the chain carries Phosphoserine. The residue at position 286 (T286) is a Phosphothreonine. 3 positions are modified to phosphoserine: S346, S349, and S387. Positions 398-427 (WGQEGMPPGAEGGFDVSSDRSHLQGAQARP) are disordered. S476 is modified (phosphoserine). The segment at 504 to 631 (TNSTPCRTPP…ESSTLQESPR (128 aa)) is disordered. Positions 515 to 534 (ELQSLSSLEEFSFHGSESGG) are enriched in low complexity. Residues 600–619 (NELEKRPNPEKVVEEGREAG) are compositionally biased toward basic and acidic residues. Residue T679 is modified to Phosphothreonine. Disordered stretches follow at residues 688-893 (SSLG…EDDT) and 906-1108 (EPWE…SSLN). 2 positions are modified to phosphoserine: S701 and S712. Over residues 722 to 734 (PANQSTQGASTAA) the composition is skewed to polar residues. Residues 735–745 (SREKPEPEQGL) are compositionally biased toward basic and acidic residues. Pro residues predominate over residues 777–790 (LSPPLPPAPPPPTP). S778 carries the phosphoserine modification. The residue at position 789 (T789) is a Phosphothreonine. A compositionally biased stretch (basic and acidic residues) spans 803 to 817 (GPEREDSSRKLRTDL). Residues 822–834 (LKSQDSPEISSLC) show a composition bias toward polar residues. The segment covering 839–848 (ATPRHSDKQN) has biased composition (basic and acidic residues). Residues 960–977 (TVKSQWTLEVPSSSSCAN) show a composition bias toward polar residues. The residue at position 974 (S974) is a Phosphoserine. Residues 992–1008 (PRREITGWDEKALRSFR) show a composition bias toward basic and acidic residues. Residues 1028–1038 (VQPNPAETSPI) are compositionally biased toward polar residues. A compositionally biased stretch (low complexity) spans 1064 to 1075 (GPESSKESSPSV). 3 positions are modified to phosphoserine: S1105, S1106, and S1178. Composition is skewed to polar residues over residues 1211–1224 (QIPQPLPSQSSGEN) and 1234–1245 (EGPSSTSGTTQK). The disordered stretch occupies residues 1211 to 1346 (QIPQPLPSQS…HRSRPGRPQS (136 aa)). Residues 1246-1265 (PAKDDSPSSLESSKEEKPKQ) show a composition bias toward basic and acidic residues. Composition is skewed to polar residues over residues 1292 to 1303 (PGSSNLLSTQDA) and 1314 to 1323 (TEPSGDNLLS).

In terms of assembly, interacts with ITSN1, which inhibits GAP activity. Interacts with PARVA. Interacts with GTP-loaded RHOU. In terms of processing, phosphorylation on Thr-789 reduces GAP activity.

The protein localises to the cell projection. The protein resides in the lamellipodium. Its subcellular location is the cell junction. It is found in the focal adhesion. In terms of biological role, functions as a GTPase-activating protein (GAP) for RAC1 and CDC42. Required for cell spreading, polarized lamellipodia formation and cell migration. The sequence is that of Rho GTPase-activating protein 31 (ARHGAP31) from Homo sapiens (Human).